A 33-amino-acid chain; its full sequence is Cytochrome b6-f complex subunit 6 (33 aa).

A helical transmembrane segment spans residues 4–24; it reads ITIISYFGLLLASIIFTLVLF.

It belongs to the PetL family. In terms of assembly, the 4 large subunits of the cytochrome b6-f complex are cytochrome b6, subunit IV (17 kDa polypeptide, PetD), cytochrome f and the Rieske protein, while the 4 small subunits are PetG, PetL, PetM and PetN. The complex functions as a dimer.

It is found in the plastid. The protein resides in the chloroplast thylakoid membrane. In terms of biological role, component of the cytochrome b6-f complex, which mediates electron transfer between photosystem II (PSII) and photosystem I (PSI), cyclic electron flow around PSI, and state transitions. PetL is important for photoautotrophic growth as well as for electron transfer efficiency and stability of the cytochrome b6-f complex. In Pinus mugo (Dwarf mountain pine), this protein is Cytochrome b6-f complex subunit 6.